The following is a 128-amino-acid chain: Ribonuclease P protein component (128 aa).

Belongs to the RnpA family. In terms of assembly, consists of a catalytic RNA component (M1 or rnpB) and a protein subunit.

The enzyme catalyses Endonucleolytic cleavage of RNA, removing 5'-extranucleotides from tRNA precursor.. Functionally, RNaseP catalyzes the removal of the 5'-leader sequence from pre-tRNA to produce the mature 5'-terminus. It can also cleave other RNA substrates such as 4.5S RNA. The protein component plays an auxiliary but essential role in vivo by binding to the 5'-leader sequence and broadening the substrate specificity of the ribozyme. The protein is Ribonuclease P protein component of Rhizobium meliloti (strain 1021) (Ensifer meliloti).